We begin with the raw amino-acid sequence, 333 residues long: Isopenicillin N synthase (333 aa).

Isopenicillin N contacts are provided by R87, Y91, and Y191. Residues R87, Y91, Y191, H216, and D218 each contribute to the N-[(5S)-5-amino-5-carboxypentanoyl]-L-cysteinyl-D-valine site. A Fe2OG dioxygenase domain is found at 180–290 (DTLSCRSLMI…RLSLPFFLHA (111 aa)). Fe(2+) contacts are provided by H216, D218, and H272. R281 serves as a coordination point for 2-oxoglutarate. S283 serves as a coordination point for isopenicillin N. S283 serves as a coordination point for N-[(5S)-5-amino-5-carboxypentanoyl]-L-cysteinyl-D-valine.

This sequence belongs to the iron/ascorbate-dependent oxidoreductase family. The cofactor is Fe cation. Requires L-ascorbate as cofactor.

The enzyme catalyses N-[(5S)-5-amino-5-carboxypentanoyl]-L-cysteinyl-D-valine + O2 = isopenicillin N + 2 H2O. The protein operates within antibiotic biosynthesis; penicillin G biosynthesis; penicillin G from L-alpha-aminoadipate and L-cysteine and L-valine: step 2/3. Its function is as follows. Removes, in the presence of oxygen, 4 hydrogen atoms from delta-L-(alpha-aminoadipyl)-L-cysteinyl-D-valine (ACV) to form the azetidinone and thiazolidine rings of isopenicillin. This chain is Isopenicillin N synthase (pcbC), found in Streptomyces microflavus (Streptomyces lipmanii).